A 778-amino-acid chain; its full sequence is Phosphoribosylformylglycinamidine synthase subunit PurL (778 aa).

Residue H44 is part of the active site. ATP contacts are provided by Y47 and K86. A Mg(2+)-binding site is contributed by E88. Residues 89–92 (SHNH) and R111 each bind substrate. H90 functions as the Proton acceptor in the catalytic mechanism. 2 residues coordinate Mg(2+): D112 and D265. Residue 309–311 (ESQ) coordinates substrate. The interval 455 to 474 (TRQPPGEGLPGRSGQAGPPK) is disordered. ATP contacts are provided by N518 and G555. Residue N556 coordinates Mg(2+). Position 558 (S558) interacts with substrate.

Belongs to the FGAMS family. Monomer. Part of the FGAM synthase complex composed of 1 PurL, 1 PurQ and 2 PurS subunits.

The protein localises to the cytoplasm. It carries out the reaction N(2)-formyl-N(1)-(5-phospho-beta-D-ribosyl)glycinamide + L-glutamine + ATP + H2O = 2-formamido-N(1)-(5-O-phospho-beta-D-ribosyl)acetamidine + L-glutamate + ADP + phosphate + H(+). It functions in the pathway purine metabolism; IMP biosynthesis via de novo pathway; 5-amino-1-(5-phospho-D-ribosyl)imidazole from N(2)-formyl-N(1)-(5-phospho-D-ribosyl)glycinamide: step 1/2. Functionally, part of the phosphoribosylformylglycinamidine synthase complex involved in the purines biosynthetic pathway. Catalyzes the ATP-dependent conversion of formylglycinamide ribonucleotide (FGAR) and glutamine to yield formylglycinamidine ribonucleotide (FGAM) and glutamate. The FGAM synthase complex is composed of three subunits. PurQ produces an ammonia molecule by converting glutamine to glutamate. PurL transfers the ammonia molecule to FGAR to form FGAM in an ATP-dependent manner. PurS interacts with PurQ and PurL and is thought to assist in the transfer of the ammonia molecule from PurQ to PurL. The polypeptide is Phosphoribosylformylglycinamidine synthase subunit PurL (Symbiobacterium thermophilum (strain DSM 24528 / JCM 14929 / IAM 14863 / T)).